The primary structure comprises 385 residues: Probable peptidoglycan glycosyltransferase FtsW (385 aa).

9 helical membrane-spanning segments follow: residues 18–38 (LLWTAILLALAGLVMVSSASL), 57–77 (IYLALGLGVGAFVYYAVPLAL), 81–101 (LRFVMLPVALVALVMVFIPGL), 111–131 (WIALPGLTIQASEIVKLCFVL), 157–177 (LLGVLMLLLLLEPDFGAVVVL), 195–215 (FLLIGLIAVALGGLVAFAEPY), 280–300 (LGLLGNVALIGGFILLGWRVF), 311–331 (LLYHAYLVYGCAFVFCSQAFI), and 347–367 (LPFISYGGSSLLISAVMVGLI).

The protein belongs to the SEDS family. FtsW subfamily.

It is found in the cell inner membrane. The enzyme catalyses [GlcNAc-(1-&gt;4)-Mur2Ac(oyl-L-Ala-gamma-D-Glu-L-Lys-D-Ala-D-Ala)](n)-di-trans,octa-cis-undecaprenyl diphosphate + beta-D-GlcNAc-(1-&gt;4)-Mur2Ac(oyl-L-Ala-gamma-D-Glu-L-Lys-D-Ala-D-Ala)-di-trans,octa-cis-undecaprenyl diphosphate = [GlcNAc-(1-&gt;4)-Mur2Ac(oyl-L-Ala-gamma-D-Glu-L-Lys-D-Ala-D-Ala)](n+1)-di-trans,octa-cis-undecaprenyl diphosphate + di-trans,octa-cis-undecaprenyl diphosphate + H(+). The protein operates within cell wall biogenesis; peptidoglycan biosynthesis. In terms of biological role, peptidoglycan polymerase that is essential for cell division. This Alcanivorax borkumensis (strain ATCC 700651 / DSM 11573 / NCIMB 13689 / SK2) protein is Probable peptidoglycan glycosyltransferase FtsW.